The following is a 197-amino-acid chain: V-type ATP synthase subunit E 2 (197 aa).

It belongs to the V-ATPase E subunit family.

Produces ATP from ADP in the presence of a proton gradient across the membrane. This Clostridium tetani (strain Massachusetts / E88) protein is V-type ATP synthase subunit E 2.